The following is a 184-amino-acid chain: UPF0398 protein BCAH820_1652 (184 aa).

It belongs to the UPF0398 family.

In Bacillus cereus (strain AH820), this protein is UPF0398 protein BCAH820_1652.